The chain runs to 435 residues: MDTWEDDRVDQRACLICGDRATGLHYGIISCEGCKGFFKRSICNKRVYRCSRDKNCVMSRKQRNRCQYCRLLKCLQMGMNRKAIREDGMPGGRNKSIGPVQISDEEVERIMSGQEFEEEANTSWSNNGDSDHSSPGNAVSESNQPSPVSTPSSSRSMELNGFSSLRDQYLGTPGPTHYQYLPHLFSFSAHPTIIPAQSRSLDPQSHTLINQLLTAEDIEPLNTPMLIEDGYKVTQSELFALLCRLADELLFRQITWVKKLPFFCDLSIKDYTCLLSTTWQELILLSSITTYSKQIFGDLTDVTSKYSPSEDELHRFSEDGMEVMERLIYLFRKFSQLKVSNEEYVCMKAINFLNQDIQGISSASQVEQLNKRYWYVCQDFTEYRYPHQPNRFPDLMMCLPEVRYIAGKLVNVPLEQLPLLFKAFLHSCKTIVTKE.

The nuclear receptor DNA-binding region spans 11 to 86; the sequence is QRACLICGDR…MGMNRKAIRE (76 aa). NR C4-type zinc fingers lie at residues 14–34 and 50–69; these read CLIC…CEGC and CSRD…CQYC. Positions 84–158 are disordered; sequence IREDGMPGGR…STPSSSRSME (75 aa). A compositionally biased stretch (polar residues) spans 121–141; it reads NTSWSNNGDSDHSSPGNAVSE. Over residues 142–156 the composition is skewed to low complexity; sequence SNQPSPVSTPSSSRS. Residues 204–435 form the NR LBD domain; the sequence is QSHTLINQLL…HSCKTIVTKE (232 aa).

Belongs to the nuclear hormone receptor family. NR6 subfamily. As to quaternary structure, homodimer. Transiently expressed in differentiating cells of all embryonic germ layers. Expressed in an anterior to posterior concentration gradient from late gastrula to midneurula stages. Shows a complicated spatio-temporal pattern of expression during neurulation, being predominant in the neural plate and neural crest in midneurula embryos. At late tailbud (stage 30), mainly expressed in the head mesenchyme, gill arches and tail tip. Expression persists in the epidermis, somites and endoderm, and in the central nervous system, expression is restricted to the midbrain, hindbrain and part of the spinal cord. Isoforms Oo and Em are both expressed in the brain and isoform Oo is expressed in the germ cells of both the adult testis and ovary.

It localises to the cytoplasm. The protein localises to the nucleus. Functionally, probable orphan nuclear receptor. Binds to a response element containing repeats of the motif 5'-AGGTCA-3'. Required for anterior-posterior patterning during organogenesis. Acts with chordin to play a role in patterning the midbrain-hindbrain. Isoform Em is required for integrin-mediated cell matrix interaction during neurulation and for the morphogenetic movements leading to formation of the neural tube. Also mediates the effect of retinoic acid on primary neurogenesis. The polypeptide is Nuclear receptor subfamily 6 group A member 1 (Xenopus laevis (African clawed frog)).